A 982-amino-acid polypeptide reads, in one-letter code: Glycine dehydrogenase (decarboxylating) (982 aa).

An N6-(pyridoxal phosphate)lysine modification is found at K721.

The protein belongs to the GcvP family. In terms of assembly, the glycine cleavage system is composed of four proteins: P, T, L and H. It depends on pyridoxal 5'-phosphate as a cofactor.

The enzyme catalyses N(6)-[(R)-lipoyl]-L-lysyl-[glycine-cleavage complex H protein] + glycine + H(+) = N(6)-[(R)-S(8)-aminomethyldihydrolipoyl]-L-lysyl-[glycine-cleavage complex H protein] + CO2. The glycine cleavage system catalyzes the degradation of glycine. The P protein binds the alpha-amino group of glycine through its pyridoxal phosphate cofactor; CO(2) is released and the remaining methylamine moiety is then transferred to the lipoamide cofactor of the H protein. The polypeptide is Glycine dehydrogenase (decarboxylating) (Prochlorococcus marinus (strain MIT 9303)).